Reading from the N-terminus, the 325-residue chain is Probable siderophore-binding lipoprotein YfiY (325 aa).

The signal sequence occupies residues 1–20 (MKKHISMLFVFLMAVMVLSA). Residue cysteine 21 is the site of N-palmitoyl cysteine attachment. Cysteine 21 is lipidated: S-diacylglycerol cysteine. A Fe/B12 periplasmic-binding domain is found at 56 to 325 (RIVVLTNEGT…DIETYFLKTK (270 aa)). A Phosphoserine modification is found at serine 290. Residue threonine 302 is modified to Phosphothreonine.

Belongs to the bacterial solute-binding protein 8 family. In terms of assembly, the complex is composed of one ATP-binding protein (YusV), two transmembrane proteins (YfiZ and YfhA) and a solute-binding protein (YfiY). Interacts with FloT.

It is found in the cell membrane. It localises to the cytoplasm. Its subcellular location is the membrane raft. Its function is as follows. Part of the ABC transporter complex YfiYZ/YfhA/YusV involved in import of the iron-hydroxamate siderophores schizokinen, arthrobactin and corprogen. Binds the siderophores and delivers them to the surface of YfiZ/YfhA. This chain is Probable siderophore-binding lipoprotein YfiY (yfiY), found in Bacillus subtilis (strain 168).